The chain runs to 212 residues: Thymidylate kinase (212 aa).

10–17 (GLEGAGKT) contacts ATP.

It belongs to the thymidylate kinase family.

It carries out the reaction dTMP + ATP = dTDP + ADP. Functionally, phosphorylation of dTMP to form dTDP in both de novo and salvage pathways of dTTP synthesis. The sequence is that of Thymidylate kinase from Serratia proteamaculans (strain 568).